The primary structure comprises 230 residues: Small ribosomal subunit protein uS7B (230 aa).

A disordered region spans residues 1–22 (MSEEVVESSSQEASQVIPQEQE). The span at 7-16 (ESSSQEASQV) shows a compositional bias: low complexity.

This sequence belongs to the universal ribosomal protein uS7 family.

The polypeptide is Small ribosomal subunit protein uS7B (RpS5b) (Drosophila melanogaster (Fruit fly)).